The primary structure comprises 345 residues: uncharacterized protein (345 aa).

It localises to the cell membrane. Functionally, involved in potassium and divalent cation transport. Enhances the transport activity of the cation/potassium transporter CzcD. This is an uncharacterized protein from Bacillus subtilis (strain 168).